Reading from the N-terminus, the 149-residue chain is Secreted RxLR effector protein 17 (149 aa).

An N-terminal signal peptide occupies residues 1 to 24 (MRLFYFSAMSVIGLLARNNMVVVA). Residues 52 to 78 (RSLRTREKDIQDSTVAKDDAIKVEEDR) carry the RxLR-dEER motif.

It belongs to the RxLR effector family.

The protein resides in the secreted. It is found in the host cytoplasm. Its subcellular location is the host nucleus. Functionally, effector that acts as a broad suppressor of cell death to interrupt plant immunity. Inhibits cell death induced by cell death-inducing proteins, including the PAMP elicitor INF1 from P.infestans. The polypeptide is Secreted RxLR effector protein 17 (Plasmopara viticola (Downy mildew of grapevine)).